The primary structure comprises 400 residues: Cysteine desulfurase 1 (400 aa).

Residues 71 to 72, Asn-150, Gln-178, and 198 to 200 contribute to the pyridoxal 5'-phosphate site; these read GT and SGH. At Lys-201 the chain carries N6-(pyridoxal phosphate)lysine. Thr-236 serves as a coordination point for pyridoxal 5'-phosphate. The Cysteine persulfide intermediate role is filled by Cys-324. Cys-324 contributes to the [2Fe-2S] cluster binding site.

The protein belongs to the class-V pyridoxal-phosphate-dependent aminotransferase family. NifS/IscS subfamily. Homodimer. It depends on pyridoxal 5'-phosphate as a cofactor.

The enzyme catalyses (sulfur carrier)-H + L-cysteine = (sulfur carrier)-SH + L-alanine. Catalyzes the removal of elemental sulfur atoms from cysteine to produce alanine. Seems to participate in the biosynthesis of the nitrogenase metalloclusters by providing the inorganic sulfur required for the Fe-S core formation. The sequence is that of Cysteine desulfurase 1 from Trichormus variabilis (strain ATCC 29413 / PCC 7937) (Anabaena variabilis).